We begin with the raw amino-acid sequence, 391 residues long: Cyclin-A1 (391 aa).

This sequence belongs to the cyclin family. Cyclin AB subfamily. Interacts with the CDK1 and the CDK2 protein kinases to form a serine/threonine kinase holoenzyme complex. The cyclin subunit imparts substrate specificity to the complex.

It localises to the nucleus. May be involved in the control of the cell cycle at the G1/S (start) and G2/M (mitosis) transitions. This is Cyclin-A1 (ccna1) from Carassius auratus (Goldfish).